The primary structure comprises 459 residues: Cysteine--tRNA ligase (459 aa).

Cysteine 29 is a Zn(2+) binding site. Residues 31 to 41 (VTTYDYCHIGH) carry the 'HIGH' region motif. Cysteine 210, histidine 235, and glutamate 239 together coordinate Zn(2+). Positions 267–271 (KMSKS) match the 'KMSKS' region motif. An ATP-binding site is contributed by lysine 270.

This sequence belongs to the class-I aminoacyl-tRNA synthetase family. Monomer. The cofactor is Zn(2+).

It localises to the cytoplasm. The catalysed reaction is tRNA(Cys) + L-cysteine + ATP = L-cysteinyl-tRNA(Cys) + AMP + diphosphate. This chain is Cysteine--tRNA ligase, found in Idiomarina loihiensis (strain ATCC BAA-735 / DSM 15497 / L2-TR).